Reading from the N-terminus, the 147-residue chain is SPI-1 type 3 secretion system pilotin (147 aa).

Residues 1–15 (MKKFYSCLPVFLLIG) form the signal peptide. The N-palmitoyl cysteine moiety is linked to residue C16. The S-diacylglycerol cysteine moiety is linked to residue C16.

This sequence belongs to the InvH family.

Its subcellular location is the cell outer membrane. Involved in the synthesis of the type III secretion system (T3SS), also called injectisome, which is used to inject bacterial effector proteins into eukaryotic host cells. Pilot protein that is required for the proper localization of the secretin InvG/SctC in the outer membrane. Necessary for efficient adherence and entry of these organisms into cultured epithelial cells. In Salmonella typhimurium (strain SL1344), this protein is SPI-1 type 3 secretion system pilotin.